The sequence spans 367 residues: tRNA pseudouridine synthase D (367 aa).

The Nucleophile role is filled by D78. The 148-residue stretch at 153-300 folds into the TRUD domain; that stretch reads GVPNYFGEQR…KQERRRIRLT (148 aa).

It belongs to the pseudouridine synthase TruD family.

It catalyses the reaction uridine(13) in tRNA = pseudouridine(13) in tRNA. Functionally, responsible for synthesis of pseudouridine from uracil-13 in transfer RNAs. The chain is tRNA pseudouridine synthase D from Colwellia psychrerythraea (strain 34H / ATCC BAA-681) (Vibrio psychroerythus).